The sequence spans 387 residues: 3-ketoacyl-CoA thiolase (387 aa).

The active-site Acyl-thioester intermediate is C91. Residues H343 and C373 each act as proton acceptor in the active site.

Belongs to the thiolase-like superfamily. Thiolase family. As to quaternary structure, heterotetramer of two alpha chains (FadB) and two beta chains (FadA).

Its subcellular location is the cytoplasm. The catalysed reaction is an acyl-CoA + acetyl-CoA = a 3-oxoacyl-CoA + CoA. The protein operates within lipid metabolism; fatty acid beta-oxidation. Catalyzes the final step of fatty acid oxidation in which acetyl-CoA is released and the CoA ester of a fatty acid two carbons shorter is formed. The chain is 3-ketoacyl-CoA thiolase from Klebsiella pneumoniae subsp. pneumoniae (strain ATCC 700721 / MGH 78578).